The primary structure comprises 189 residues: Putative manganese efflux pump MntP (189 aa).

6 consecutive transmembrane segments (helical) span residues 3-23, 41-61, 62-82, 104-124, 132-152, and 168-188; these read PVAT…AAIG, LIFG…GKAA, AQYV…VLGA, FWLL…VGAG, IYST…IGVM, and AGGI…LNIF.

It belongs to the MntP (TC 9.B.29) family.

The protein resides in the cell inner membrane. In terms of biological role, probably functions as a manganese efflux pump. The protein is Putative manganese efflux pump MntP of Paraburkholderia phytofirmans (strain DSM 17436 / LMG 22146 / PsJN) (Burkholderia phytofirmans).